We begin with the raw amino-acid sequence, 310 residues long: tRNA dimethylallyltransferase (310 aa).

5 to 12 is an ATP binding site; sequence GPTASGKS. Position 7–12 (7–12) interacts with substrate; sequence TASGKS. The tract at residues 30 to 33 is interaction with substrate tRNA; the sequence is DSMQ.

Belongs to the IPP transferase family. As to quaternary structure, monomer. The cofactor is Mg(2+).

It carries out the reaction adenosine(37) in tRNA + dimethylallyl diphosphate = N(6)-dimethylallyladenosine(37) in tRNA + diphosphate. In terms of biological role, catalyzes the transfer of a dimethylallyl group onto the adenine at position 37 in tRNAs that read codons beginning with uridine, leading to the formation of N6-(dimethylallyl)adenosine (i(6)A). This is tRNA dimethylallyltransferase from Rhodopseudomonas palustris (strain HaA2).